A 364-amino-acid chain; its full sequence is Chorismate synthase (364 aa).

R48 provides a ligand contact to NADP(+). FMN-binding positions include 125–127 (RSS), 237–238 (NA), G277, 292–296 (KPTSS), and R318.

This sequence belongs to the chorismate synthase family. Homotetramer. FMNH2 serves as cofactor.

The enzyme catalyses 5-O-(1-carboxyvinyl)-3-phosphoshikimate = chorismate + phosphate. It functions in the pathway metabolic intermediate biosynthesis; chorismate biosynthesis; chorismate from D-erythrose 4-phosphate and phosphoenolpyruvate: step 7/7. Functionally, catalyzes the anti-1,4-elimination of the C-3 phosphate and the C-6 proR hydrogen from 5-enolpyruvylshikimate-3-phosphate (EPSP) to yield chorismate, which is the branch point compound that serves as the starting substrate for the three terminal pathways of aromatic amino acid biosynthesis. This reaction introduces a second double bond into the aromatic ring system. This chain is Chorismate synthase, found in Albidiferax ferrireducens (strain ATCC BAA-621 / DSM 15236 / T118) (Rhodoferax ferrireducens).